Consider the following 93-residue polypeptide: Putative defensin-like protein 282 (93 aa).

An N-terminal signal peptide occupies residues 1–25; that stretch reads MANATSFIALAYLLASALMTTVVLG. 3 cysteine pairs are disulfide-bonded: Cys-51/Cys-83, Cys-66/Cys-90, and Cys-72/Cys-92.

Belongs to the DEFL family.

The protein localises to the secreted. The sequence is that of Putative defensin-like protein 282 from Arabidopsis thaliana (Mouse-ear cress).